We begin with the raw amino-acid sequence, 775 residues long: Acylamino-acid-releasing enzyme 1 (775 aa).

Catalysis depends on charge relay system residues serine 627, aspartate 718, and histidine 750.

It belongs to the peptidase S9C family. As to quaternary structure, homotetramer.

Its subcellular location is the cytoplasm. The catalysed reaction is Cleavage of an N-acetyl or N-formyl amino acid from the N-terminus of a polypeptide.. Functionally, catalyzes the hydrolysis of the N-terminal peptide bond of an N-acetylated peptide to generate an N-acetylated amino acid and a peptide with a free N-terminus. The chain is Acylamino-acid-releasing enzyme 1 from Oryza sativa subsp. japonica (Rice).